The chain runs to 483 residues: Glutamyl-tRNA(Gln) amidotransferase subunit A (483 aa).

Active-site charge relay system residues include Lys-76 and Ser-151. Ser-175 acts as the Acyl-ester intermediate in catalysis.

It belongs to the amidase family. GatA subfamily. As to quaternary structure, heterotrimer of A, B and C subunits.

It carries out the reaction L-glutamyl-tRNA(Gln) + L-glutamine + ATP + H2O = L-glutaminyl-tRNA(Gln) + L-glutamate + ADP + phosphate + H(+). Its function is as follows. Allows the formation of correctly charged Gln-tRNA(Gln) through the transamidation of misacylated Glu-tRNA(Gln) in organisms which lack glutaminyl-tRNA synthetase. The reaction takes place in the presence of glutamine and ATP through an activated gamma-phospho-Glu-tRNA(Gln). The protein is Glutamyl-tRNA(Gln) amidotransferase subunit A of Chromobacterium violaceum (strain ATCC 12472 / DSM 30191 / JCM 1249 / CCUG 213 / NBRC 12614 / NCIMB 9131 / NCTC 9757 / MK).